The following is a 345-amino-acid chain: Protein TRIGALACTOSYLDIACYLGLYCEROL 3, chloroplastic (345 aa).

The N-terminal 46 residues, 1-46 (MLSLSCSSSSSSLLPPSLHYHGSSSVQSIVVPRRSLISFRRKVSCC), are a transit peptide targeting the chloroplast. An ABC transporter domain is found at 85 to 336 (IECRDVYKSF…TNPIVQQFAT (252 aa)). Residue 117–124 (GPSGTGKS) coordinates ATP.

Belongs to the ABC transporter superfamily. ABCI family. Catalytic subunit of the TGD complex, a lipid translocator at the inner chloroplast envelope membrane made of TGD1, TGD2 and TGD3. Interacts with TGD1 and TGD2 with an overall subunit stoichiometry of 2 TGD1, 2 TGD3 and 8 to 12 TGD2. Interacts with TGD5.

The protein resides in the plastid. Its subcellular location is the chloroplast stroma. In terms of biological role, ATPase transporter involved in lipid transfer from the endoplasmic reticulum (ER) to plastids, and necessary for thylakoids formation. Not involved in transition metal transport pathways. The chain is Protein TRIGALACTOSYLDIACYLGLYCEROL 3, chloroplastic from Arabidopsis thaliana (Mouse-ear cress).